The following is a 308-amino-acid chain: Methionyl-tRNA formyltransferase (308 aa).

Residue 109–112 (SLLP) participates in (6S)-5,6,7,8-tetrahydrofolate binding.

This sequence belongs to the Fmt family.

It carries out the reaction L-methionyl-tRNA(fMet) + (6R)-10-formyltetrahydrofolate = N-formyl-L-methionyl-tRNA(fMet) + (6S)-5,6,7,8-tetrahydrofolate + H(+). In terms of biological role, attaches a formyl group to the free amino group of methionyl-tRNA(fMet). The formyl group appears to play a dual role in the initiator identity of N-formylmethionyl-tRNA by promoting its recognition by IF2 and preventing the misappropriation of this tRNA by the elongation apparatus. This is Methionyl-tRNA formyltransferase from Clostridium beijerinckii (strain ATCC 51743 / NCIMB 8052) (Clostridium acetobutylicum).